Here is a 238-residue protein sequence, read N- to C-terminus: MSELKYKRALIKLSGEALAGDKKFGIDPETVSNICREIAEVLEMGLQVSLVIGGGNIFRGLSSSAKGMDRSSADYMGMLATVLNAVAVQDALEKLGHATRVLSAITMQEVCEPYIRRRAERHLEKGRVVICAAGTGNPYFTTDTAAALRGMELKCDVIIKATKVDGVYDKDPMQHDDAVMYRQLSYIEVLQKNLRVMDSTAISLCMENNVPIIVCNMYKGGIKRAVMGEDVGTIVQGG.

12–15 (KLSG) is a binding site for ATP. A UMP-binding site is contributed by Gly54. 2 residues coordinate ATP: Gly55 and Arg59. UMP is bound by residues Asp74 and 135–142 (TGNPYFTT). 3 residues coordinate ATP: Thr162, Tyr168, and Asp171.

It belongs to the UMP kinase family. Homohexamer.

The protein localises to the cytoplasm. It carries out the reaction UMP + ATP = UDP + ADP. Its pathway is pyrimidine metabolism; CTP biosynthesis via de novo pathway; UDP from UMP (UMPK route): step 1/1. Inhibited by UTP. Catalyzes the reversible phosphorylation of UMP to UDP. In Oleidesulfovibrio alaskensis (strain ATCC BAA-1058 / DSM 17464 / G20) (Desulfovibrio alaskensis), this protein is Uridylate kinase.